The following is a 144-amino-acid chain: Large ribosomal subunit protein uL15 (144 aa).

The tract at residues 1-53 (MFLNTIKPGEGAKHAKRRVGRGIGSGLGKTAGRGHKGQKSRSGGFHKVGFEGG) is disordered. Gly residues predominate over residues 21 to 31 (RGIGSGLGKTA).

The protein belongs to the universal ribosomal protein uL15 family. In terms of assembly, part of the 50S ribosomal subunit.

Binds to the 23S rRNA. This Laribacter hongkongensis (strain HLHK9) protein is Large ribosomal subunit protein uL15.